An 80-amino-acid polypeptide reads, in one-letter code: N-V protease (80 aa).

Belongs to the peptidase S8 family. In terms of assembly, monomer. Body cavity.

The protein localises to the secreted. Inhibited by the serine protease inhibitors DFP, PMSF and TLCK. Not inhibited by the serine protease inhibitors aprotinin, elastinal, SBTI and benzamidine, the cysteine protease inhibitors iodoacetate and E64, or the metalloprotease inhibitors EDTA and EGTA. In terms of biological role, serine protease. Hydrolyzes the alpha chains of fibrin and fibrinogen completely, has lower activity on the beta and gamma chains of fibrin and fibrinogen. In Alitta virens (Sandworm), this protein is N-V protease.